We begin with the raw amino-acid sequence, 425 residues long: Trigger factor (425 aa).

Residues 158–231 enclose the PPIase FKBP-type domain; the sequence is GDLVRVNMEV…VEEVYKRTLP (74 aa).

It belongs to the FKBP-type PPIase family. Tig subfamily.

It is found in the cytoplasm. It catalyses the reaction [protein]-peptidylproline (omega=180) = [protein]-peptidylproline (omega=0). In terms of biological role, involved in protein export. Acts as a chaperone by maintaining the newly synthesized protein in an open conformation. Functions as a peptidyl-prolyl cis-trans isomerase. The chain is Trigger factor from Thermotoga petrophila (strain ATCC BAA-488 / DSM 13995 / JCM 10881 / RKU-1).